Reading from the N-terminus, the 2713-residue chain is Histone-lysine N-methyltransferase 2B (2713 aa).

Gly residues predominate over residues 1–11 (MAAAAGGGSCP). 3 disordered regions span residues 1-65 (MAAA…GEDT), 82-524 (RLWA…PTVV), and 542-783 (VSAR…ARVA). Residue Ala2 is modified to N-acetylalanine. Residues 12–24 (GPGSARGRFPGRP) are compositionally biased toward low complexity. Positions 17 to 36 (RGRFPGRPRGSGGGGGRGGR) match the Menin-binding motif (MBM) motif. Gly residues-rich tracts occupy residues 25-38 (RGSG…GRGN) and 49-60 (RGGGAAGPGGAE). Positions 37–44 (GNGAERVR) form a DNA-binding region, a.T hook 1. Residues 109–123 (PEEESSDGESEEEEF) are compositionally biased toward acidic residues. Positions 110–117 (EEESSDGE) form a DNA-binding region, a.T hook 2. Ser113, Ser114, and Ser118 each carry phosphoserine. The segment covering 144–158 (QRGRAPRGRGRKHKT) has biased composition (basic residues). Over residues 340–360 (PQRKDGDEPERGSCRKKQEQK) the composition is skewed to basic and acidic residues. The segment at residues 357–365 (QEQKLEEEE) is a DNA-binding region (a.T hook 3). Acidic residues predominate over residues 361 to 393 (LEEEEEEEEKEGEEKEEKDDNEDNNKQEEEEET). The span at 394 to 412 (ERAVAEEEAMLAKEKEEAK) shows a compositional bias: basic and acidic residues. Over residues 414–460 (PSPPLTPPVPSPPPPLPPPSTSPPPPASPLPPPVSPPPPLSPPPYPA) the composition is skewed to pro residues. Over residues 501-517 (GTLSPTPNPSTTTGSPL) the composition is skewed to low complexity. Over residues 555 to 566 (RFMDEDPPKPPK) the composition is skewed to basic and acidic residues. The span at 577–605 (ATSPPAPQEPVPVSSPPRVPTPPSTPVPL) shows a compositional bias: pro residues. Over residues 606–617 (PEKRRSILREPT) the composition is skewed to basic and acidic residues. Positions 627-645 (LPPPPPAPPPAPSPPPAPA) are enriched in pro residues. Composition is skewed to low complexity over residues 646–657 (TPSRRPLLLRAP), 715–728 (VPVV…EVPP), and 738–756 (QQLQ…LLPQ). The segment covering 757–774 (ALPPQQPQAQPPPSPQHT) has biased composition (pro residues). A Glycyl lysine isopeptide (Lys-Gly) (interchain with G-Cter in SUMO2) cross-link involves residue Lys810. Phosphoserine is present on residues Ser826, Ser849, and Ser866. Disordered stretches follow at residues 831–872 (TEEA…QGPR) and 899–964 (SALP…HHGK). Residues 841–862 (TPDRGCVRSEDESMEAKRDRAS) are compositionally biased toward basic and acidic residues. The segment covering 912-922 (EDTSSASETES) has biased composition (low complexity). Ser941 is modified (phosphoserine). Basic residues predominate over residues 953–964 (TPRRSLPSHHGK). The CXXC-type zinc finger occupies 964–1011 (KKMRMARCGHCRGCLRVQDCGSCVNCLDKPKFGGPNTKKQCCVYRKCD). Residues Cys971, Cys974, Cys977, Cys983, Cys986, Cys989, Cys1005, and Cys1010 each contribute to the Zn(2+) site. 2 disordered regions span residues 1032-1076 (LLPW…DSLL) and 1088-1138 (QRPS…LQPV). A phosphoserine mark is found at Ser1037, Ser1040, Ser1098, and Ser1101. Lys1142 is covalently cross-linked (Glycyl lysine isopeptide (Lys-Gly) (interchain with G-Cter in SUMO2)). 3 PHD-type zinc fingers span residues 1207-1258 (PMVC…CKFC), 1255-1309 (CKFC…CVRC), and 1341-1402 (GNYC…CAGA). The region spanning 1410–1510 (ALSGALQGGL…GLLLKLLESA (101 aa)) is the Bromo domain. Residues 1550–1572 (RQQESETPESGQPPGDPSAAFQS) form a disordered region. A C2HC pre-PHD-type zinc finger spans residues 1584 to 1624 (PRQCALCLKYGDADSKEAGRLLYIGQNEWTHVNCAIWSAEV). The PHD-type 4 zinc-finger motif lies at 1645 to 1692 (MRCELCLKPGATVGCCLSSCLSNFHFMCARASYCIFQDDKKVFCQKHT). One can recognise an FYR N-terminal domain in the interval 1733-1789 (VINVLIGSIRINSLGTLSDLSDCEGRLFPIGYQCSRLYWSTVDARRRCWYRCRILEY). Over residues 1808 to 1821 (QTIVHSPTPSSDTD) the composition is skewed to polar residues. Disordered regions lie at residues 1808–1973 (QTIV…GPDF), 2056–2104 (QLDG…PPED), 2116–2160 (NLGG…RTFA), 2279–2356 (VSTF…RCPL), and 2382–2408 (YSAG…PKRV). Low complexity-rich tracts occupy residues 1872–1890 (PLGG…PSSL) and 1923–1933 (RRTSSPLRTSP). Residues Ser1926 and Ser1932 each carry the phosphoserine modification. Polar residues predominate over residues 1939 to 1950 (LSTSVTALTPTS). A compositionally biased stretch (acidic residues) spans 2058 to 2068 (DGVDDGTDSEA). Phosphothreonine is present on residues Thr2064 and Thr2079. Residues 2084–2093 (PGVGRGGVLG) are compositionally biased toward gly residues. Residues 2140–2153 (NGSQPPQSLSTSPA) show a composition bias toward polar residues. Phosphoserine occurs at positions 2286 and 2346. The region spanning 2409–2490 (GPHLRFEISS…QRCQHYKFRY (82 aa)) is the FYR C-terminal domain. Residues 2506–2511 (GAARAE) carry the WDR5 interaction motif (WIN) motif. The SET domain maps to 2573–2689 (EAVGVYRSAI…RGEELTYDYK (117 aa)). S-adenosyl-L-methionine-binding positions include His2583, Arg2585, Tyr2627, and 2650–2651 (NH). The Zn(2+) site is built by Cys2653 and Cys2701. Residues 2697–2713 (NKLPCNCGAKRCRRFLN) enclose the Post-SET domain. Asn2702 is an S-adenosyl-L-methionine binding site. Positions 2703 and 2708 each coordinate Zn(2+).

The protein belongs to the class V-like SAM-binding methyltransferase superfamily. Histone-lysine methyltransferase family. TRX/MLL subfamily. In terms of assembly, component of the menin-associated histone methyltransferase complex, at least composed of KMT2B/MLL4, ASH2L, RBBP5, WDR5, DPY30, MEN1; the complex interacts with POLR2A and POLR2B via MEN1. Interacts with NFE2. Interacts with KDM6B. Interacts (via WIN motif) with WDR5. Interacts (via MBM motif) with MEN1.

The protein localises to the nucleus. It carries out the reaction L-lysyl(4)-[histone H3] + S-adenosyl-L-methionine = N(6)-methyl-L-lysyl(4)-[histone H3] + S-adenosyl-L-homocysteine + H(+). The enzyme catalyses N(6)-methyl-L-lysyl(4)-[histone H3] + S-adenosyl-L-methionine = N(6),N(6)-dimethyl-L-lysyl(4)-[histone H3] + S-adenosyl-L-homocysteine + H(+). In terms of biological role, histone methyltransferase that catalyzes methyl group transfer from S-adenosyl-L-methionine to the epsilon-amino group of 'Lys-4' of histone H3 (H3K4) via a non-processive mechanism. Part of chromatin remodeling machinery predominantly forms H3K4me1 and H3K4me2 methylation marks at active chromatin sites where transcription and DNA repair take place. Likely plays a redundant role with KMT2C in enriching H3K4me1 marks on primed and active enhancer elements. Plays a central role in beta-globin locus transcription regulation by being recruited by NFE2. Plays an important role in controlling bulk H3K4me during oocyte growth and preimplantation development. Required during the transcriptionally active period of oocyte growth for the establishment and/or maintenance of bulk H3K4 trimethylation (H3K4me3), global transcriptional silencing that preceeds resumption of meiosis, oocyte survival and normal zygotic genome activation. This is Histone-lysine N-methyltransferase 2B (Kmt2b) from Mus musculus (Mouse).